A 186-amino-acid polypeptide reads, in one-letter code: Ribosome-recycling factor (186 aa).

It belongs to the RRF family.

It localises to the cytoplasm. Functionally, responsible for the release of ribosomes from messenger RNA at the termination of protein biosynthesis. May increase the efficiency of translation by recycling ribosomes from one round of translation to another. This is Ribosome-recycling factor from Rickettsia felis (strain ATCC VR-1525 / URRWXCal2) (Rickettsia azadi).